Consider the following 380-residue polypeptide: 3-methylitaconate isomerase (380 aa).

It belongs to the PrpF family. In terms of assembly, homotetramer.

The enzyme catalyses 2-methylene-3-methylsuccinate = dimethylmaleate. Its pathway is cofactor degradation; nicotinate degradation; propanoate and pyruvate from 6-hydroxynicotinate: step 6/8. With respect to regulation, inhibited by oxidized glutathione, p-chloromercuriphenylsulfonic acid and iodoacetic acid. Not inhibited by the chelating agent alpha,alpha-dipyridyl. Activity is slightly increased by EDTA. Not activated by Fe(2+), Mg(2+), Mn(2+) or Ca(2+). Unaffected by K(+), Na(+), NH4(+), Rb(+) or Li(+). Catalyzes the reversible isomerization of (R)-3-methylitaconate to 2,3-dimethylmaleate. Has very low isomerase activity with itaconate. In Eubacterium barkeri (Clostridium barkeri), this protein is 3-methylitaconate isomerase (mii).